We begin with the raw amino-acid sequence, 151 residues long: Deoxyuridine 5'-triphosphate nucleotidohydrolase (151 aa).

Substrate-binding positions include 70-72 (RSG), N83, 87-89 (LID), and M97.

Belongs to the dUTPase family. It depends on Mg(2+) as a cofactor.

The catalysed reaction is dUTP + H2O = dUMP + diphosphate + H(+). Its pathway is pyrimidine metabolism; dUMP biosynthesis; dUMP from dCTP (dUTP route): step 2/2. This enzyme is involved in nucleotide metabolism: it produces dUMP, the immediate precursor of thymidine nucleotides and it decreases the intracellular concentration of dUTP so that uracil cannot be incorporated into DNA. The sequence is that of Deoxyuridine 5'-triphosphate nucleotidohydrolase from Pseudomonas aeruginosa (strain UCBPP-PA14).